The sequence spans 237 residues: Segregation and condensation protein A (237 aa).

Belongs to the ScpA family. Component of a cohesin-like complex composed of ScpA, ScpB and the Smc homodimer, in which ScpA and ScpB bind to the head domain of Smc. The presence of the three proteins is required for the association of the complex with DNA.

The protein resides in the cytoplasm. In terms of biological role, participates in chromosomal partition during cell division. May act via the formation of a condensin-like complex containing Smc and ScpB that pull DNA away from mid-cell into both cell halves. The polypeptide is Segregation and condensation protein A (Streptococcus thermophilus (strain ATCC BAA-250 / LMG 18311)).